A 324-amino-acid polypeptide reads, in one-letter code: tRNA dimethylallyltransferase (324 aa).

Position 17-24 (17-24 (GPTASGKT)) interacts with ATP. Residue 19–24 (TASGKT) coordinates substrate. Interaction with substrate tRNA stretches follow at residues 42 to 45 (DSAL), 166 to 170 (QRIQR), and 251 to 256 (RCVGYR).

Belongs to the IPP transferase family. In terms of assembly, monomer. Mg(2+) serves as cofactor.

The enzyme catalyses adenosine(37) in tRNA + dimethylallyl diphosphate = N(6)-dimethylallyladenosine(37) in tRNA + diphosphate. Functionally, catalyzes the transfer of a dimethylallyl group onto the adenine at position 37 in tRNAs that read codons beginning with uridine, leading to the formation of N6-(dimethylallyl)adenosine (i(6)A). The protein is tRNA dimethylallyltransferase of Burkholderia pseudomallei (strain 668).